A 656-amino-acid polypeptide reads, in one-letter code: Receptor-type tyrosine-protein phosphatase R (656 aa).

Residues 1–23 form the signal peptide; it reads MRRAVGFPALCLLLNLHAAGCFS. The O-linked (Xyl...) (chondroitin sulfate) serine glycan is linked to serine 23. The Extracellular segment spans residues 24–226; the sequence is RNNDHFLAIR…EADKIWSKEG (203 aa). Asparagine 128 is a glycosylation site (N-linked (GlcNAc...) asparagine). Residues 227–247 form a helical membrane-spanning segment; that stretch reads FYAVVIFLSIFIIIVTCLMII. At 248–656 the chain is on the cytoplasmic side; that stretch reads YRLKERLQLS…ESRLSPETVE (409 aa). A disordered region spans residues 269 to 289; the sequence is HLSPIARQQAQSEAKTTHSMV. Residue serine 271 is modified to Phosphoserine. Residues 274–289 are compositionally biased toward polar residues; it reads ARQQAQSEAKTTHSMV. Phosphoserine; by PKA is present on serine 338. Residues 392–646 enclose the Tyrosine-protein phosphatase domain; the sequence is LQSEFMEIPM…EFVHHALCLF (255 aa). Substrate contacts are provided by residues aspartate 553, 587–593, and glutamine 631; that span reads CSAGIGR. Cysteine 587 serves as the catalytic Phosphocysteine intermediate.

This sequence belongs to the protein-tyrosine phosphatase family. Receptor class 7 subfamily. As to quaternary structure, interacts with MAPKs. Expressed in the heart, brain, spleen, lung, liver, skeletal muscle, kidney and testis. Isoform alpha is expressed throughout the granular layer of the cerebellar but not within the Purkinje cells, also in the villi of the ileum and jejunum and both the villi and crypts of the duodenum. Isoform beta is expressed only in the Purkinje cells. Isoform gamma is expressed throughout the brain, the villi and crypts of the duodenum, jejunum and ileum and expressed at low levels in the proximal colon.

Its subcellular location is the cell membrane. It is found in the cytoplasm. It catalyses the reaction O-phospho-L-tyrosyl-[protein] + H2O = L-tyrosyl-[protein] + phosphate. In terms of biological role, sequesters mitogen-activated protein kinases (MAPKs) such as MAPK1, MAPK3 and MAPK14 in the cytoplasm in an inactive form. The MAPKs bind to a dephosphorylated kinase interacting motif, phosphorylation of which by the protein kinase A complex releases the MAPKs for activation and translocation into the nucleus. Isoform gamma may have a role in patterning and cellular proliferation of skeletal elements in the precartilaginous/cartilaginous skeleton. The polypeptide is Receptor-type tyrosine-protein phosphatase R (Ptprr) (Mus musculus (Mouse)).